We begin with the raw amino-acid sequence, 390 residues long: Probable purine permease 18 (390 aa).

Residues 1-14 are compositionally biased toward polar residues; the sequence is MEMTEASKQTTAEG. Positions 1 to 23 are disordered; sequence MEMTEASKQTTAEGSANPEPDQI. Residue S25 is modified to Phosphoserine. Helical transmembrane passes span 39 to 59, 81 to 101, 120 to 140, 148 to 168, 176 to 196, 211 to 231, 250 to 270, 297 to 317, 324 to 344, and 348 to 368; these read ISVS…MLLL, WLQA…FFIF, LILL…LFAL, GVFT…AAII, WIIL…PEFG, WLTF…QLCF, VIEM…VGLF, IGLA…VLYV, VVHM…FDFM, and FSWP…SYFY.

This sequence belongs to the purine permeases (TC 2.A.7.14) family.

The protein resides in the membrane. The chain is Probable purine permease 18 (PUP18) from Arabidopsis thaliana (Mouse-ear cress).